The chain runs to 853 residues: MSLSEGQVHRFLDQNPGFADQYFGRKLSPEDVANACEDGCPEGCTSFRELCQVEESAALFELVQDMQENVNMERVVFKILRRLCSILHADRCSLFMYRQRNGVAELATRLFSVQPDSVLEDCLVPPDSEIVFPLDIGVVGHVAQTKKMVNVQDVMECPHFSSFADELTDYVTRNILATPIMNGKDVVAVIMAVNKLDGPCFTSEDEDVFLKYLNFGTLNLKIYHLSYLHNCETRRGQVLLWSANKVFEELTDIERQFHKAFYTVRAYLNCDRYSVGLLDMTKEKEFFDVWPVLMGEAQAYSGPRTPDGREILFYKVIDYILHGKEDIKVIPSPPADHWALASGLPTYVAESGFICNIMNAPADEMFNFQEGPLDDSGWIVKNVLSMPIVNKKEEIVGVATFYNRKDGKPFDEQDEVLMESLTQFLGWSVLNTDTYDKMNKLENRKDIAQDMVLYHVRCDREEIQLILPTRERLGKEPADCEEDELGKILKEVLPGPAKFDIYEFHFSDLECTELELVKCGIQMYYELGVVRKFQIPQEVLVRFLFSVSKGYRRITYHNWRHGFNVAQTMFTLLMTGKLKSYYTDLEAFAMVTAGLCHDIDHRGTNNLYQMKSQNPLAKLHGSSILERHHLEFGKFLLSEETLNIYQNLNRRQHEHVIHLMDIAIIATDLALYFKKRTMFQKIVDESKNYEDRKSWVEYLSLETTRKEIVMAMMMTACDLSAITKPWEVQSKVALLVAAEFWEQGDLERTVLDQQPIPMMDRNKAAELPKLQVGFIDFVCTFVYKEFSRFHEEILPMFDRLQNNRKEWKALADEYEAKVKALEEDQKKETTAKKVGTEICNGGPAPRSSTCRIL.

The residue at position 2 (Ser-2) is an N-acetylserine. GAF domains lie at 71-220 (NMER…TLNL) and 252-429 (DIER…GWSV). Residues 481–814 (EEDELGKILK…KEWKALADEY (334 aa)) enclose the PDEase domain. His-557 acts as the Proton donor in catalysis. Positions 561, 597, 598, and 718 each coordinate a divalent metal cation. Cys-850 bears the Cysteine methyl ester mark. A lipid anchor (S-geranylgeranyl cysteine) is attached at Cys-850. Positions 851–853 (RIL) are cleaved as a propeptide — removed in mature form.

The protein belongs to the cyclic nucleotide phosphodiesterase family. Oligomer composed of two catalytic chains (alpha and beta), an inhibitory chain (gamma) and the delta chain. A divalent metal cation serves as cofactor.

The protein resides in the membrane. It localises to the cell projection. Its subcellular location is the cilium. It is found in the photoreceptor outer segment. The catalysed reaction is 3',5'-cyclic GMP + H2O = GMP + H(+). Functionally, necessary for the formation of a functional phosphodiesterase holoenzyme. Involved in retinal circadian rhythm photoentrainment via modulation of UVA and orange light-induced phase-shift of the retina clock. May participate in processes of transmission and amplification of the visual signal. Rod-specific cGMP phosphodiesterase that catalyzes the hydrolysis of 3',5'-cyclic GMP. Necessary for the formation of a functional phosphodiesterase holoenzyme. Involved in retinal circadian rhythm photoentrainment via modulation of UVA and orange light-induced phase-shift of the retina clock. May participate in processes of transmission and amplification of the visual signal. This is Rod cGMP-specific 3',5'-cyclic phosphodiesterase subunit beta (PDE6B) from Bos taurus (Bovine).